Here is a 273-residue protein sequence, read N- to C-terminus: Dermonecrotic toxin LsaSicTox-alphaIB1bi (273 aa).

Residue H5 is part of the active site. Residues E25 and D27 each coordinate Mg(2+). H41 serves as the catalytic Nucleophile. 2 cysteine pairs are disulfide-bonded: C45/C51 and C47/C190. D85 contributes to the Mg(2+) binding site.

Belongs to the arthropod phospholipase D family. Class II subfamily. Mg(2+) is required as a cofactor. As to expression, expressed by the venom gland.

The protein localises to the secreted. The enzyme catalyses an N-(acyl)-sphingosylphosphocholine = an N-(acyl)-sphingosyl-1,3-cyclic phosphate + choline. It catalyses the reaction an N-(acyl)-sphingosylphosphoethanolamine = an N-(acyl)-sphingosyl-1,3-cyclic phosphate + ethanolamine. It carries out the reaction a 1-acyl-sn-glycero-3-phosphocholine = a 1-acyl-sn-glycero-2,3-cyclic phosphate + choline. The catalysed reaction is a 1-acyl-sn-glycero-3-phosphoethanolamine = a 1-acyl-sn-glycero-2,3-cyclic phosphate + ethanolamine. In terms of biological role, dermonecrotic toxins cleave the phosphodiester linkage between the phosphate and headgroup of certain phospholipids (sphingolipid and lysolipid substrates), forming an alcohol (often choline) and a cyclic phosphate. This toxin acts on sphingomyelin (SM). It may also act on ceramide phosphoethanolamine (CPE), lysophosphatidylcholine (LPC) and lysophosphatidylethanolamine (LPE), but not on lysophosphatidylserine (LPS), and lysophosphatidylglycerol (LPG). It acts by transphosphatidylation, releasing exclusively cyclic phosphate products as second products. Induces dermonecrosis, hemolysis, increased vascular permeability, edema, inflammatory response, and platelet aggregation. This is Dermonecrotic toxin LsaSicTox-alphaIB1bi from Loxosceles sabina (Tucson recluse spider).